We begin with the raw amino-acid sequence, 252 residues long: Triosephosphate isomerase (252 aa).

10–12 (NWK) provides a ligand contact to substrate. The Electrophile role is filled by histidine 96. Glutamate 168 serves as the catalytic Proton acceptor. Substrate-binding positions include glycine 174, serine 214, and 235-236 (GG).

This sequence belongs to the triosephosphate isomerase family. As to quaternary structure, homodimer.

It localises to the cytoplasm. It catalyses the reaction D-glyceraldehyde 3-phosphate = dihydroxyacetone phosphate. It participates in carbohydrate biosynthesis; gluconeogenesis. Its pathway is carbohydrate degradation; glycolysis; D-glyceraldehyde 3-phosphate from glycerone phosphate: step 1/1. In terms of biological role, involved in the gluconeogenesis. Catalyzes stereospecifically the conversion of dihydroxyacetone phosphate (DHAP) to D-glyceraldehyde-3-phosphate (G3P). The polypeptide is Triosephosphate isomerase (Streptococcus mutans serotype c (strain ATCC 700610 / UA159)).